The sequence spans 448 residues: tRNA modification GTPase MnmE (448 aa).

Arg-22, Glu-79, and Lys-118 together coordinate (6S)-5-formyl-5,6,7,8-tetrahydrofolate. The 158-residue stretch at 214–371 (GLHVVLAGQP…LRQELLRIAG (158 aa)) folds into the TrmE-type G domain. Asn-224 contacts K(+). Residues 224–229 (NVGKSS), 243–249 (TPIAGTT), and 268–271 (DTAG) contribute to the GTP site. Ser-228 provides a ligand contact to Mg(2+). Positions 243, 245, and 248 each coordinate K(+). A Mg(2+)-binding site is contributed by Thr-249. Residue Lys-448 coordinates (6S)-5-formyl-5,6,7,8-tetrahydrofolate.

The protein belongs to the TRAFAC class TrmE-Era-EngA-EngB-Septin-like GTPase superfamily. TrmE GTPase family. As to quaternary structure, homodimer. Heterotetramer of two MnmE and two MnmG subunits. K(+) is required as a cofactor.

It is found in the cytoplasm. Functionally, exhibits a very high intrinsic GTPase hydrolysis rate. Involved in the addition of a carboxymethylaminomethyl (cmnm) group at the wobble position (U34) of certain tRNAs, forming tRNA-cmnm(5)s(2)U34. This is tRNA modification GTPase MnmE from Dechloromonas aromatica (strain RCB).